Consider the following 45-residue polypeptide: DVCDSLVGGRCIHNGCWCERSAPHGNCCNTSGCTARWWCPGTKFD.

4 disulfide bridges follow: C3–C16, C11–C28, C18–C33, and C27–C39. W17 bears the 6'-bromotryptophan mark. P23 bears the 4-hydroxyproline mark. 2 positions are modified to 6'-bromotryptophan: W37 and W38. The residue at position 40 (P40) is a 4-hydroxyproline.

As to expression, expressed by the venom duct.

The protein resides in the secreted. Its function is as follows. Mu-conotoxins block voltage-gated sodium channels. This toxin reversibly blocks voltage-gated sodium channel in cephalopods, with no alteration in the voltage dependence of sodium conductance or on the kinetics of inactivation. The sequence is that of Mu-conotoxin-like Cal 12.1.2d from Californiconus californicus (California cone).